A 309-amino-acid polypeptide reads, in one-letter code: MEFKHIPVLLKETIDSLNIKQDGVYVDCTLGGGGHSLEILKRLSDKGKLIAIDQDISAINWSEERLKNFKNIIYVHDNFYNIQQILKELKIDKVDGIIMDLGVSSYQLDEGKRGFSYMKDAPLDMRMNRDSSLSAYEIVNQYNEEELCRIIRDYGEENFSRRISKFIVKAREESPISTTLQLVGIIKKAIPLKFQKEGHPAKRTFQAIRIEVNEELKILDKAVEDGVANLNTGGRIAIITFHSLEDRIIKSKFKMLENPCTCPADFPICICGKKPIVKIVNKKPIVPTEEEKSINPRSKSSKLRIAERI.

S-adenosyl-L-methionine is bound by residues 33-35, aspartate 53, phenylalanine 79, aspartate 100, and glutamine 107; that span reads GGH.

The protein belongs to the methyltransferase superfamily. RsmH family.

It localises to the cytoplasm. It catalyses the reaction cytidine(1402) in 16S rRNA + S-adenosyl-L-methionine = N(4)-methylcytidine(1402) in 16S rRNA + S-adenosyl-L-homocysteine + H(+). Specifically methylates the N4 position of cytidine in position 1402 (C1402) of 16S rRNA. This chain is Ribosomal RNA small subunit methyltransferase H, found in Clostridium kluyveri (strain NBRC 12016).